Consider the following 237-residue polypeptide: Chaplin-B (237 aa).

Residues 1–26 (MRRVTRNGVLAVAASGALAVTMPAYA) form the signal peptide. The Chaplin 1 domain maps to 42-82 (SPGLISGNTVQLPVDVPVDVCGNTVNVVGLLNPAAGNGCAD). Disordered stretches follow at residues 81–127 (ADSG…LSGN) and 148–216 (GIGN…TLAG). Positions 101-115 (GSATEATSGGAAAEG) are enriched in low complexity. The Chaplin 2 domain occupies 120–160 (SPGVLSGNGVQLPVHLPVNVSGNSVNVVGIGNPAVGNESTN). Pro residues predominate over residues 169–178 (VRPPAEPEPS). The short motif at 202–206 (LAHTG) is the LPXTG sorting signal element. Pentaglycyl murein peptidoglycan amidated threonine is present on Thr205. The propeptide at 206 to 237 (GTDRTLPTLAGGAALVLGGTVLYRRFRPGSGD) is removed by sortase.

It belongs to the chaplin family. Long chaplin subfamily.

The protein localises to the secreted. It is found in the cell wall. Functionally, one of 8 partially redundant surface-active proteins required for efficient formation of aerial mycelium; the short chaplins assemble into a hydrophobic, amyloidal fibrillar surface layer that envelopes and protects aerial hyphae and spores, presumably anchored to the long chaplins. Chaplins have an overlapping function with the surface-active SapB peptide; chaplins are essential on minimal medium while on rich medium both chaplins and SapB are required for efficient aerial hyphae formation. The long chaplins (ChpA, ChpB, ChpC) are not absolutely necessary for short chaplin localization or rodlet formation, but probably play a role in initiating aerial hyphae development. Chaplins are also involved in cell attachment to a hydrophobic surface. This chain is Chaplin-B, found in Streptomyces coelicolor (strain ATCC BAA-471 / A3(2) / M145).